The primary structure comprises 458 residues: Exodeoxyribonuclease 7 large subunit (458 aa).

It belongs to the XseA family. As to quaternary structure, heterooligomer composed of large and small subunits.

The protein resides in the cytoplasm. It carries out the reaction Exonucleolytic cleavage in either 5'- to 3'- or 3'- to 5'-direction to yield nucleoside 5'-phosphates.. Bidirectionally degrades single-stranded DNA into large acid-insoluble oligonucleotides, which are then degraded further into small acid-soluble oligonucleotides. In Yersinia enterocolitica serotype O:8 / biotype 1B (strain NCTC 13174 / 8081), this protein is Exodeoxyribonuclease 7 large subunit.